The sequence spans 315 residues: Acetaldehyde dehydrogenase 2 (315 aa).

13–16 is a binding site for NAD(+); the sequence is SGNI. Cysteine 131 functions as the Acyl-thioester intermediate in the catalytic mechanism. Residues 162-170 and asparagine 290 each bind NAD(+); that span reads SAGPGTRAN.

The protein belongs to the acetaldehyde dehydrogenase family.

It catalyses the reaction acetaldehyde + NAD(+) + CoA = acetyl-CoA + NADH + H(+). The sequence is that of Acetaldehyde dehydrogenase 2 from Pseudomonas putida (strain W619).